An 803-amino-acid chain; its full sequence is Volume-regulated anion channel subunit LRRC8B (803 aa).

Residues 1-25 (MITLTELKCLADAQSSYHILKPWWD) lie on the Cytoplasmic side of the membrane. A helical membrane pass occupies residues 26 to 46 (VFWYYITLIMLLVAVLAGALQ). The Extracellular portion of the chain corresponds to 47-119 (LTQSRVLCCL…YEKQLHWFAK (73 aa)). Disulfide bonds link Cys55–Cys304 and Cys109–Cys289. Asn78 carries an N-linked (GlcNAc...) asparagine glycan. A helical transmembrane segment spans residues 120–140 (FFPYLVLLHTLIFAACSNFWL). The Cytoplasmic portion of the chain corresponds to 141–261 (HYPSTSSRLE…DIIYRVYLKQ (121 aa)). 2 positions are modified to phosphoserine: Ser186 and Ser196. The helical transmembrane segment at 262 to 282 (IIVKVILFVLIITYVPYFLSY) threads the bilayer. At 283-307 (ITLEIDCSIDVQAFTGYKRYQCVYS) the chain is on the extracellular side. A helical membrane pass occupies residues 308–328 (LAEIFKVLASFYVILVMLYGL). The Cytoplasmic segment spans residues 329–803 (TSSYSLWWML…ERLQTCLDKC (475 aa)). LRR repeat units lie at residues 415–439 (VKNS…VFEL), 440–462 (TEME…VAQL), 464–486 (NLRE…AFLE), 488–509 (NLRI…VFHL), 511–532 (NLKE…LHLE), 539–559 (NLRT…VTDL), 562–582 (SLQK…NNLK), 586–607 (NLKS…IFSL), 609–630 (NLHE…ISFQ), 634–655 (SLSC…IGAL), 657–678 (NLEQ…LFLC), 680–701 (KLHY…IQYL), 703–724 (NLQY…LFQC), 726–747 (KLQC…VGEL), and 749–771 (NLTH…EGCQ).

It belongs to the LRRC8 family. In terms of assembly, heterohexamer; oligomerizes with other LRRC8 proteins (LRRC8A, LRRC8C, LRRC8D and/or LRRC8E) to form a heterohexamer. In vivo, the subunit composition may depend primarily on expression levels, and heterooligomeric channels containing various proportions of the different LRRC8 proteins may coexist.

It is found in the cell membrane. The protein resides in the endoplasmic reticulum membrane. The enzyme catalyses chloride(in) = chloride(out). The catalysed reaction is iodide(out) = iodide(in). It carries out the reaction taurine(out) = taurine(in). Non-essential component of the volume-regulated anion channel (VRAC, also named VSOAC channel), an anion channel required to maintain a constant cell volume in response to extracellular or intracellular osmotic changes. The VRAC channel conducts iodide better than chloride and can also conduct organic osmolytes like taurine. Channel activity requires LRRC8A plus at least one other family member (LRRC8B, LRRC8C, LRRC8D or LRRC8E); channel characteristics depend on the precise subunit composition. This Mus musculus (Mouse) protein is Volume-regulated anion channel subunit LRRC8B.